Here is a 136-residue protein sequence, read N- to C-terminus: Ribonuclease YqgF (136 aa).

The protein belongs to the YqgF nuclease family. As to quaternary structure, monomer; also forms low amounts of dimers. The cofactor is Mn(2+).

Its subcellular location is the cytoplasm. In terms of biological role, has robust sequence-specific RNase activity, acting as a 5'-3' exo/endonuclease on ssRNA substrates with minimally 3 consecutive adenine bases. Has no detectable nuclease activity on dsRNA, dsDNA or Holliday junction DNA. The chain is Ribonuclease YqgF from Deinococcus radiodurans (strain ATCC 13939 / DSM 20539 / JCM 16871 / CCUG 27074 / LMG 4051 / NBRC 15346 / NCIMB 9279 / VKM B-1422 / R1).